The following is a 287-amino-acid chain: Putative holocytochrome-c1 synthase (287 aa).

The segment covering 1 to 12 (MRGFGSDSSQAS) has biased composition (polar residues). Disordered regions lie at residues 1–63 (MRGF…QPSS) and 81–100 (QSQSANSTQQAQPPKLSAPL). Composition is skewed to low complexity over residues 31 to 63 (QARAAQSASTSAAPALPQSVQVAPASQPSQPSS) and 81 to 92 (QSQSANSTQQAQ).

This sequence belongs to the cytochrome c-type heme lyase family.

The protein resides in the mitochondrion inner membrane. It carries out the reaction holo-[cytochrome c] = apo-[cytochrome c] + heme b. Its function is as follows. Probable lyase that catalyzes the covalent linking of the heme group to the cytochrome C apoprotein to produce the mature functional cytochrome. This is Putative holocytochrome-c1 synthase from Chaetomium thermophilum (strain DSM 1495 / CBS 144.50 / IMI 039719) (Thermochaetoides thermophila).